The following is a 122-amino-acid chain: Small ribosomal subunit protein uS13 (122 aa).

The tract at residues 95 to 122 is disordered; that stretch reads GLPVRGQRTKTNARTRKGPKKTIAGKKK.

The protein belongs to the universal ribosomal protein uS13 family. As to quaternary structure, part of the 30S ribosomal subunit. Forms a loose heterodimer with protein S19. Forms two bridges to the 50S subunit in the 70S ribosome.

Functionally, located at the top of the head of the 30S subunit, it contacts several helices of the 16S rRNA. In the 70S ribosome it contacts the 23S rRNA (bridge B1a) and protein L5 of the 50S subunit (bridge B1b), connecting the 2 subunits; these bridges are implicated in subunit movement. Contacts the tRNAs in the A and P-sites. This is Small ribosomal subunit protein uS13 from Corynebacterium aurimucosum (strain ATCC 700975 / DSM 44827 / CIP 107346 / CN-1) (Corynebacterium nigricans).